Reading from the N-terminus, the 98-residue chain is UPF0251 protein Sputw3181_3483 (98 aa).

The protein belongs to the UPF0251 family.

This Shewanella sp. (strain W3-18-1) protein is UPF0251 protein Sputw3181_3483.